The sequence spans 430 residues: MTVIAKIYAREILDSRGNPTLEAEVTLENAVCGRAAVPSGASTGTKEAVELRDGDKTRYLGKGVRAAVDNVNGVIAAALVGFDGADQTGLDHRLINLDGTENKGRLGANALLGVSLATAHAVAAARKQPLWMYLSTLGESKLSLPVPMMNIINGGAHADNNVDFQEFMVLPVGFASFSEALRAGTEIFHALKSVLKGQGLSTAVGDEGGFAPDFRSNVEALDAILEAIGRAGYIAGEDVLLGLDVASSEFRNNGKYNLVGENKRLTSEQFVDFLDDLVAQYPIISIEDGLAEDDWVGWKQLTERIGHKVQLVGDDLFVTNPKVFQEGITSGIANAILIKLNQIGTLTETLESIAMAHRAQYAAIVSHRSGETEDTSIADIAVATTATQIKTGSLCRSDRVAKYNQLLRIEQALGVGARYAGRDAFVSLKS.

Gln-165 lines the (2R)-2-phosphoglycerate pocket. The active-site Proton donor is Glu-207. Mg(2+) is bound by residues Asp-244, Glu-287, and Asp-314. Lys-339, Arg-368, Ser-369, and Lys-390 together coordinate (2R)-2-phosphoglycerate. Residue Lys-339 is the Proton acceptor of the active site.

This sequence belongs to the enolase family. As to quaternary structure, component of the RNA degradosome, a multiprotein complex involved in RNA processing and mRNA degradation. Mg(2+) serves as cofactor.

It is found in the cytoplasm. The protein localises to the secreted. Its subcellular location is the cell surface. The catalysed reaction is (2R)-2-phosphoglycerate = phosphoenolpyruvate + H2O. Its pathway is carbohydrate degradation; glycolysis; pyruvate from D-glyceraldehyde 3-phosphate: step 4/5. Its function is as follows. Catalyzes the reversible conversion of 2-phosphoglycerate (2-PG) into phosphoenolpyruvate (PEP). It is essential for the degradation of carbohydrates via glycolysis. The polypeptide is Enolase (Xylella fastidiosa (strain M23)).